Reading from the N-terminus, the 89-residue chain is Small ribosomal subunit protein uS15 (89 aa).

This sequence belongs to the universal ribosomal protein uS15 family. In terms of assembly, part of the 30S ribosomal subunit. Forms a bridge to the 50S subunit in the 70S ribosome, contacting the 23S rRNA.

One of the primary rRNA binding proteins, it binds directly to 16S rRNA where it helps nucleate assembly of the platform of the 30S subunit by binding and bridging several RNA helices of the 16S rRNA. In terms of biological role, forms an intersubunit bridge (bridge B4) with the 23S rRNA of the 50S subunit in the ribosome. The sequence is that of Small ribosomal subunit protein uS15 from Pectobacterium atrosepticum (strain SCRI 1043 / ATCC BAA-672) (Erwinia carotovora subsp. atroseptica).